Reading from the N-terminus, the 431-residue chain is Adenylosuccinate synthetase (431 aa).

Residues 13-19 (GDEGKGK) and 41-43 (GHT) each bind GTP. Asp-14 functions as the Proton acceptor in the catalytic mechanism. Asp-14 and Gly-41 together coordinate Mg(2+). IMP is bound by residues 14 to 17 (DEGK), 39 to 42 (NAGH), Thr-130, Arg-144, Gln-225, Thr-240, and Arg-304. The active-site Proton donor is His-42. Position 300–306 (300–306 (AVTGRPR)) interacts with substrate. Residues Arg-306, 332-334 (KLD), and 415-417 (STG) each bind GTP.

It belongs to the adenylosuccinate synthetase family. As to quaternary structure, homodimer. Mg(2+) is required as a cofactor.

Its subcellular location is the cytoplasm. It catalyses the reaction IMP + L-aspartate + GTP = N(6)-(1,2-dicarboxyethyl)-AMP + GDP + phosphate + 2 H(+). Its pathway is purine metabolism; AMP biosynthesis via de novo pathway; AMP from IMP: step 1/2. Functionally, plays an important role in the de novo pathway of purine nucleotide biosynthesis. Catalyzes the first committed step in the biosynthesis of AMP from IMP. This is Adenylosuccinate synthetase from Legionella pneumophila (strain Paris).